Reading from the N-terminus, the 741-residue chain is Pentatricopeptide repeat-containing protein At3g58590 (741 aa).

PPR repeat units lie at residues Pro48 to Arg78, Asn79 to Pro113, Asn114 to Met146, Asp148 to Lys178, Ser179 to Leu213, Thr214 to Cys248, Glu249 to Trp279, Asp280 to Pro314, Asn315 to Thr349, Gly350 to Lys380, Asn381 to Pro414, Thr415 to Asp445, Asn446 to Pro481, Asn483 to Pro508, Asp509 to Pro543, Asp544 to Cys578, Asp580 to Lys610, Asn611 to Pro645, Asp646 to Pro680, and Glu681 to Pro715.

The protein belongs to the PPR family. P subfamily.

This Arabidopsis thaliana (Mouse-ear cress) protein is Pentatricopeptide repeat-containing protein At3g58590.